We begin with the raw amino-acid sequence, 524 residues long: Homeobox protein engrailed-like SMOX-2 (524 aa).

Residues 194 to 218 (SSSSSSSSSSSSSSSSSSCSTNSSS) are disordered. The segment at residues 423–482 (LKRPRTSFTVPQLKRLSQEFEKNRYLDELRRKKLATELDLRESQVKIWFQNKRAKTKKAS) is a DNA-binding region (homeobox).

Belongs to the engrailed homeobox family.

Its subcellular location is the nucleus. The polypeptide is Homeobox protein engrailed-like SMOX-2 (SMOX-2) (Schistosoma mansoni (Blood fluke)).